Reading from the N-terminus, the 42-residue chain is Photosystem II reaction center protein J (42 aa).

Residues 10–30 (IPLWLVLTIIGLAAIALLALF) traverse the membrane as a helical segment.

The protein belongs to the PsbJ family. As to quaternary structure, PSII is composed of 1 copy each of membrane proteins PsbA, PsbB, PsbC, PsbD, PsbE, PsbF, PsbH, PsbI, PsbJ, PsbK, PsbL, PsbM, PsbT, PsbY, PsbZ, Psb30/Ycf12, at least 3 peripheral proteins of the oxygen-evolving complex and a large number of cofactors. It forms dimeric complexes.

The protein localises to the plastid. The protein resides in the chloroplast thylakoid membrane. This protein is a component of the reaction center of photosystem II. In terms of biological role, one of the components of the core complex of photosystem II (PSII). PSII is a light-driven water:plastoquinone oxidoreductase that uses light energy to abstract electrons from H(2)O, generating O(2) and a proton gradient subsequently used for ATP formation. It consists of a core antenna complex that captures photons, and an electron transfer chain that converts photonic excitation into a charge separation. This is Photosystem II reaction center protein J from Euglena gracilis.